The primary structure comprises 1488 residues: WD repeat-containing protein 7 (1488 aa).

WD repeat units lie at residues 17 to 56 (APTHCISSILLTDDGGTIVTGCHDGQICLWDLSEELEVNP), 62 to 104 (GHTA…CIEF), 156 to 199 (ISPD…SGLQ), 324 to 366 (VICP…DKQE), 404 to 443 (NEPLKVTASVYIPAHGRLVCGREDGSIIIVPATQTAIVQL), 462 to 507 (GHRN…MKHI), and 558 to 597 (RHLFPIQVIKWRPSDDYLVVGCTDGSVCVWQMDTGALDRC). Disordered regions lie at residues 761 to 781 (EEEDEEEVMRQRREESDPEYR) and 911 to 947 (GDHMKKGPTRPPRPGTPDLSKARDSPPASSNIVQGQI). A compositionally biased stretch (basic and acidic residues) spans 768–781 (VMRQRREESDPEYR). A Phosphoserine modification is found at Ser-935. Residues 937–947 (PASSNIVQGQI) are compositionally biased toward polar residues. WD repeat units lie at residues 1349–1388 (PAICRFYMVSYYERSHRIAVGARHGSVALYDIRTGKCQTI) and 1390–1430 (GHKG…LGSI). Position 1454 is a phosphoserine (Ser-1454).

The polypeptide is WD repeat-containing protein 7 (Wdr7) (Rattus norvegicus (Rat)).